Here is a 199-residue protein sequence, read N- to C-terminus: ATP-dependent Clp protease proteolytic subunit (199 aa).

S98 acts as the Nucleophile in catalysis. H123 is a catalytic residue.

Belongs to the peptidase S14 family. In terms of assembly, fourteen ClpP subunits assemble into 2 heptameric rings which stack back to back to give a disk-like structure with a central cavity, resembling the structure of eukaryotic proteasomes.

It localises to the cytoplasm. The enzyme catalyses Hydrolysis of proteins to small peptides in the presence of ATP and magnesium. alpha-casein is the usual test substrate. In the absence of ATP, only oligopeptides shorter than five residues are hydrolyzed (such as succinyl-Leu-Tyr-|-NHMec, and Leu-Tyr-Leu-|-Tyr-Trp, in which cleavage of the -Tyr-|-Leu- and -Tyr-|-Trp bonds also occurs).. Functionally, cleaves peptides in various proteins in a process that requires ATP hydrolysis. Has a chymotrypsin-like activity. Plays a major role in the degradation of misfolded proteins. This Clostridium botulinum (strain Alaska E43 / Type E3) protein is ATP-dependent Clp protease proteolytic subunit.